The following is a 437-amino-acid chain: Adenylosuccinate synthetase (437 aa).

GTP-binding positions include 13-19 and 41-43; these read GDEGKGK and GHT. Asp14 serves as the catalytic Proton acceptor. Residues Asp14 and Gly41 each contribute to the Mg(2+) site. IMP contacts are provided by residues 14–17, 39–42, Thr130, Arg144, Gln225, Thr240, and Arg310; these read DEGK and NAGH. The active-site Proton donor is the His42. Residue 306 to 312 coordinates substrate; the sequence is ATTGRLR. GTP-binding positions include Arg312, 338–340, and 421–423; these read KLD and STG.

It belongs to the adenylosuccinate synthetase family. As to quaternary structure, homodimer. Mg(2+) is required as a cofactor.

The protein localises to the cytoplasm. The catalysed reaction is IMP + L-aspartate + GTP = N(6)-(1,2-dicarboxyethyl)-AMP + GDP + phosphate + 2 H(+). Its pathway is purine metabolism; AMP biosynthesis via de novo pathway; AMP from IMP: step 1/2. Functionally, plays an important role in the de novo pathway of purine nucleotide biosynthesis. Catalyzes the first committed step in the biosynthesis of AMP from IMP. The chain is Adenylosuccinate synthetase from Psychromonas ingrahamii (strain DSM 17664 / CCUG 51855 / 37).